Consider the following 607-residue polypeptide: CRS2-associated factor 2, chloroplastic (607 aa).

The disordered stretch occupies residues 1–75 (MSPPPPQRPS…GNGGNPAFRA (75 aa)). The transit peptide at 1–79 (MSPPPPQRPS…NPAFRAPHLR (79 aa)) directs the protein to the chloroplast. CRM domains lie at 228–324 (EPLT…TRPR) and 346–442 (EGLT…YPKP). The CRS2 binding stretch occupies residues 482-505 (KMFELWTNAIESSVALMLDDAEVD). Positions 550 to 576 (TEDEPETGTLEPQQHEFTESSDVAEDD) are disordered.

As to quaternary structure, interacts with CRS2 and RNA. Part of large ribonucleo-protein complexes that include group IIB introns, CRS2 and CAF2.

It localises to the plastid. The protein localises to the chloroplast stroma. Functionally, required for the splicing of group IIB introns in chloroplasts. Forms splicing particles with CRS2. Interacts with RNA and confers intron specificity of the splicing particles. The chain is CRS2-associated factor 2, chloroplastic from Oryza sativa subsp. japonica (Rice).